The chain runs to 504 residues: Histidine ammonia-lyase (504 aa).

The segment at residues 142 to 144 (ASG) is a cross-link (5-imidazolinone (Ala-Gly)). Ser143 is modified (2,3-didehydroalanine (Ser)).

Belongs to the PAL/histidase family. Post-translationally, contains an active site 4-methylidene-imidazol-5-one (MIO), which is formed autocatalytically by cyclization and dehydration of residues Ala-Ser-Gly.

It localises to the cytoplasm. It carries out the reaction L-histidine = trans-urocanate + NH4(+). It functions in the pathway amino-acid degradation; L-histidine degradation into L-glutamate; N-formimidoyl-L-glutamate from L-histidine: step 1/3. In Staphylococcus aureus (strain JH1), this protein is Histidine ammonia-lyase.